Reading from the N-terminus, the 406-residue chain is Argininosuccinate synthase (406 aa).

Residues 12–20 (AYSGGLDTS) and alanine 39 each bind ATP. L-citrulline-binding residues include tyrosine 90 and serine 95. Position 120 (glycine 120) interacts with ATP. Threonine 122, asparagine 126, and aspartate 127 together coordinate L-aspartate. Residue asparagine 126 participates in L-citrulline binding. Arginine 130, serine 179, serine 188, glutamate 264, and tyrosine 276 together coordinate L-citrulline.

This sequence belongs to the argininosuccinate synthase family. Type 1 subfamily. As to quaternary structure, homotetramer.

It is found in the cytoplasm. It catalyses the reaction L-citrulline + L-aspartate + ATP = 2-(N(omega)-L-arginino)succinate + AMP + diphosphate + H(+). Its pathway is amino-acid biosynthesis; L-arginine biosynthesis; L-arginine from L-ornithine and carbamoyl phosphate: step 2/3. This Geobacter sp. (strain M21) protein is Argininosuccinate synthase.